Here is a 106-residue protein sequence, read N- to C-terminus: MSPIAFLLPFLLQMVLSTNVSTTSNNGVTEIRLDNKIVDLTKATVLERSKCCTVYRPVEDSSCIIVSSKHGASMVNCHGSVSISTSGKLSAEEMAEFNSLTQKYSG.

The N-terminal stretch at 1 to 17 (MSPIAFLLPFLLQMVLS) is a signal peptide.

In terms of processing, contains 2 disulfide bonds. Expressed by the venom gland (anterior main gland) (at protein level).

The protein resides in the secreted. The polypeptide is Venom family 8-like peptide Pr8a (Platymeris rhadamanthus (Red spot assassin bug)).